Here is a 209-residue protein sequence, read N- to C-terminus: Probable GTP-binding protein EngB (209 aa).

Residues 22-198 (TPLEIAFVGR…NRTVGSWFDA (177 aa)) enclose the EngB-type G domain. Mg(2+) is bound by residues Ser-37 and Thr-59.

It belongs to the TRAFAC class TrmE-Era-EngA-EngB-Septin-like GTPase superfamily. EngB GTPase family. Mg(2+) is required as a cofactor.

Its function is as follows. Necessary for normal cell division and for the maintenance of normal septation. The sequence is that of Probable GTP-binding protein EngB from Neisseria meningitidis serogroup C (strain 053442).